The primary structure comprises 89 residues: Small ribosomal subunit protein uS15 (89 aa).

It belongs to the universal ribosomal protein uS15 family. As to quaternary structure, part of the 30S ribosomal subunit. Forms a bridge to the 50S subunit in the 70S ribosome, contacting the 23S rRNA.

Functionally, one of the primary rRNA binding proteins, it binds directly to 16S rRNA where it helps nucleate assembly of the platform of the 30S subunit by binding and bridging several RNA helices of the 16S rRNA. In terms of biological role, forms an intersubunit bridge (bridge B4) with the 23S rRNA of the 50S subunit in the ribosome. The sequence is that of Small ribosomal subunit protein uS15 from Photorhabdus luminescens (Xenorhabdus luminescens).